The chain runs to 552 residues: Polypeptide N-acetylgalactosaminyltransferase 14 (552 aa).

The Cytoplasmic portion of the chain corresponds to 1 to 6 (MRRLTR). The chain crosses the membrane as a helical; Signal-anchor for type II membrane protein span at residues 7-26 (RLVLPVFGVLWITVLLFFWV). Residues 27 to 552 (TKRKLEVPTG…MSQHWDMVSS (526 aa)) lie on the Lumenal side of the membrane. 5 disulfides stabilise this stretch: Cys-101/Cys-328, Cys-319/Cys-397, Cys-430/Cys-449, Cys-476/Cys-493, and Cys-517/Cys-538. Positions 110-215 (LPPTSIIITF…RDWLQPLLHR (106 aa)) are catalytic subdomain A. 2 residues coordinate substrate: Asp-151 and Arg-176. A Mn(2+)-binding site is contributed by Asp-199. Residue Ser-200 participates in substrate binding. His-201 provides a ligand contact to Mn(2+). The catalytic subdomain B stretch occupies residues 274–336 (PIRTPIIAGG…PCSRVGHVFR (63 aa)). Substrate is bound at residue Trp-305. Residue His-333 participates in Mn(2+) binding. Substrate contacts are provided by Arg-336, His-339, and Tyr-341. The Ricin B-type lectin domain maps to 415–550 (KESSIQKGNI…SLMSQHWDMV (136 aa)).

The protein belongs to the glycosyltransferase 2 family. GalNAc-T subfamily. Mn(2+) is required as a cofactor. In terms of tissue distribution, detected in renal tubules (at protein level). Highly expressed in fetal and adult kidney. Widely expressed at low level. Weakly expressed in whole brain, cerebellum, thymus, lung, mammary gland, liver, stomach, small intestine, colon, pancreas, spleen, bladder, uterus, placenta, testis, ovary, skeletal muscle, leukocyte, B-cell, bone marrow, fetal brain, fetal thymus, fetal lung, fetal liver, fetal small intestine, fetal spleen, fetal skeletal and fetus. Detected in renal tubules (at protein level).

It localises to the golgi apparatus membrane. It carries out the reaction L-seryl-[protein] + UDP-N-acetyl-alpha-D-galactosamine = a 3-O-[N-acetyl-alpha-D-galactosaminyl]-L-seryl-[protein] + UDP + H(+). It catalyses the reaction L-threonyl-[protein] + UDP-N-acetyl-alpha-D-galactosamine = a 3-O-[N-acetyl-alpha-D-galactosaminyl]-L-threonyl-[protein] + UDP + H(+). The protein operates within protein modification; protein glycosylation. Functionally, catalyzes the initial reaction in O-linked oligosaccharide biosynthesis, the transfer of an N-acetyl-D-galactosamine residue to a serine or threonine residue on the protein receptor. Displays activity toward mucin-derived peptide substrates such as Muc2, Muc5AC, Muc7, and Muc13 (-58). May be involved in O-glycosylation in kidney. In Homo sapiens (Human), this protein is Polypeptide N-acetylgalactosaminyltransferase 14 (GALNT14).